The chain runs to 509 residues: Photosystem II CP47 reaction center protein (509 aa).

Helical transmembrane passes span 21-36, 101-115, 140-156, 203-218, 237-252, and 457-472; these read AVHLMHTALVAGWAGS, IVLSGMLFLAAIWHW, GIHLLLSSLLCFGFGAF, IAAGTVGILAGVFHLT, VLSSSISAVFFSAFVT, and NFALIFFFGHLWHGSR.

It belongs to the PsbB/PsbC family. PsbB subfamily. In terms of assembly, PSII is composed of 1 copy each of membrane proteins PsbA, PsbB, PsbC, PsbD, PsbE, PsbF, PsbH, PsbI, PsbJ, PsbK, PsbL, PsbM, PsbT, PsbX, PsbY, PsbZ, Psb30/Ycf12, at least 3 peripheral proteins of the oxygen-evolving complex and a large number of cofactors. It forms dimeric complexes. Binds multiple chlorophylls. PSII binds additional chlorophylls, carotenoids and specific lipids. is required as a cofactor.

The protein localises to the plastid. The protein resides in the chloroplast thylakoid membrane. One of the components of the core complex of photosystem II (PSII). It binds chlorophyll and helps catalyze the primary light-induced photochemical processes of PSII. PSII is a light-driven water:plastoquinone oxidoreductase, using light energy to abstract electrons from H(2)O, generating O(2) and a proton gradient subsequently used for ATP formation. This Pyropia yezoensis (Susabi-nori) protein is Photosystem II CP47 reaction center protein.